The primary structure comprises 73 residues: ComX pheromone (73 aa).

Residues 1–52 constitute a propeptide that is removed on maturation; the sequence is MKHIDKIISHLVNNPEAFDQFKNGNLTLLNINEKEKKAILYAFEQGEVPRTS. The 3'-farnesyl-2',N2-cyclotryptophan moiety is linked to residue W54. The propeptide occupies 59–73; sequence AISNFFEDDKRKSLI.

In terms of assembly, interacts directly with the sensor histidine kinase ComP and stimulates its activity. Trp-54 is modified by farnesylation, which is essential for activity. Modified by the tryptophan prenyltransferase ComQ before export to the extracellular environment.

It is found in the secreted. Part of a major quorum-sensing system that regulates the development of genetic competence. Acts through the activation of the two-component regulatory system ComP/ComA composed of a sensor histidine kinase, ComP, and a response regulator, ComA. Activates the expression of the genes for biosynthesis of poly-gamma-glutamic acid (gamma-PGA), which is involved in biofilm formation in B.subtilis natto. This chain is ComX pheromone, found in Bacillus subtilis subsp. natto (strain BEST195).